Reading from the N-terminus, the 332-residue chain is D-lactate dehydrogenase (332 aa).

Residues Arg-155–Ile-156, Asp-175, Val-206–Pro-207, Asn-212, Phe-233–Arg-235, and Asp-259 contribute to the NAD(+) site. Residue Arg-235 is part of the active site. Glu-264 is an active-site residue. Catalysis depends on His-296, which acts as the Proton donor.

Belongs to the D-isomer specific 2-hydroxyacid dehydrogenase family.

It carries out the reaction (R)-lactate + NAD(+) = pyruvate + NADH + H(+). The polypeptide is D-lactate dehydrogenase (ldhD) (Lactiplantibacillus plantarum (strain ATCC BAA-793 / NCIMB 8826 / WCFS1) (Lactobacillus plantarum)).